The primary structure comprises 557 residues: Small ribosomal subunit protein bS1 (557 aa).

S1 motif domains are found at residues 21-87 (GSIV…LSRE), 105-171 (SATV…VSRR), 192-260 (GMEV…LGLK), 277-347 (GTKL…LGLK), 364-434 (GDRV…LGVK), and 451-520 (GAIV…LSIR).

It belongs to the bacterial ribosomal protein bS1 family.

Functionally, binds mRNA; thus facilitating recognition of the initiation point. It is needed to translate mRNA with a short Shine-Dalgarno (SD) purine-rich sequence. The sequence is that of Small ribosomal subunit protein bS1 (rpsA) from Dickeya dadantii (strain 3937) (Erwinia chrysanthemi (strain 3937)).